Here is a 503-residue protein sequence, read N- to C-terminus: Probable cytosol aminopeptidase (503 aa).

2 residues coordinate Mn(2+): K270 and D275. K282 is a catalytic residue. Mn(2+) is bound by residues D293, D352, and E354. R356 is a catalytic residue.

The protein belongs to the peptidase M17 family. Mn(2+) is required as a cofactor.

The protein resides in the cytoplasm. It catalyses the reaction Release of an N-terminal amino acid, Xaa-|-Yaa-, in which Xaa is preferably Leu, but may be other amino acids including Pro although not Arg or Lys, and Yaa may be Pro. Amino acid amides and methyl esters are also readily hydrolyzed, but rates on arylamides are exceedingly low.. It carries out the reaction Release of an N-terminal amino acid, preferentially leucine, but not glutamic or aspartic acids.. Presumably involved in the processing and regular turnover of intracellular proteins. Catalyzes the removal of unsubstituted N-terminal amino acids from various peptides. This Shigella boydii serotype 4 (strain Sb227) protein is Probable cytosol aminopeptidase.